Reading from the N-terminus, the 115-residue chain is Holo-[acyl-carrier-protein] synthase (115 aa).

Positions 6 and 51 each coordinate Mg(2+).

Belongs to the P-Pant transferase superfamily. AcpS family. Mg(2+) serves as cofactor.

It localises to the cytoplasm. The catalysed reaction is apo-[ACP] + CoA = holo-[ACP] + adenosine 3',5'-bisphosphate + H(+). Transfers the 4'-phosphopantetheine moiety from coenzyme A to a Ser of acyl-carrier-protein. The protein is Holo-[acyl-carrier-protein] synthase of Campylobacter jejuni subsp. doylei (strain ATCC BAA-1458 / RM4099 / 269.97).